A 437-amino-acid polypeptide reads, in one-letter code: Adenylosuccinate synthetase (437 aa).

Residues 12-18 and 40-42 contribute to the GTP site; these read GDEGKGK and GHT. Aspartate 13 functions as the Proton acceptor in the catalytic mechanism. The Mg(2+) site is built by aspartate 13 and glycine 40. Residues 13–16, 38–41, threonine 128, arginine 142, glutamine 223, threonine 238, and arginine 302 each bind IMP; these read DEGK and NAGH. Histidine 41 functions as the Proton donor in the catalytic mechanism. Residue 298–304 participates in substrate binding; sequence TTTGRRR. GTP contacts are provided by residues arginine 304, 330 to 332, and 412 to 414; these read KLD and SLG.

The protein belongs to the adenylosuccinate synthetase family. Homodimer. The cofactor is Mg(2+).

It is found in the cytoplasm. It carries out the reaction IMP + L-aspartate + GTP = N(6)-(1,2-dicarboxyethyl)-AMP + GDP + phosphate + 2 H(+). It participates in purine metabolism; AMP biosynthesis via de novo pathway; AMP from IMP: step 1/2. In terms of biological role, plays an important role in the de novo pathway of purine nucleotide biosynthesis. Catalyzes the first committed step in the biosynthesis of AMP from IMP. The polypeptide is Adenylosuccinate synthetase (Prochlorococcus marinus (strain MIT 9211)).